A 349-amino-acid polypeptide reads, in one-letter code: Mitogen-activated protein kinase sty1 (349 aa).

One can recognise a Protein kinase domain in the interval 20-299; the sequence is YSDLQPIGMG…AADALAHNYL (280 aa). ATP is bound by residues 26-34 and K49; that span reads IGMGAFGLV. The active-site Proton acceptor is the D141. T171 carries the post-translational modification Phosphothreonine. Residues 171-173 carry the TXY motif; it reads TGY. At Y173 the chain carries Phosphotyrosine. S175 is subject to Phosphoserine. T176 bears the Phosphothreonine mark. The TXY motif lies at 176 to 178; the sequence is TRY.

This sequence belongs to the protein kinase superfamily. Ser/Thr protein kinase family. MAP kinase subfamily. HOG1 sub-subfamily. As to quaternary structure, interacts with cdc37, cmk2, hal4, sin1 and srk1. It depends on Mg(2+) as a cofactor. In terms of processing, dually phosphorylated on Thr-171 and Tyr-173, which activates the enzyme. Phosphorylated by wis1 in response to osmotic stress, nutrient limitation, hydrogen peroxide and arsenite. Dephosphorylated by pyp1 and pyp2.

Its subcellular location is the cytoplasm. It localises to the nucleus. The catalysed reaction is L-seryl-[protein] + ATP = O-phospho-L-seryl-[protein] + ADP + H(+). It carries out the reaction L-threonyl-[protein] + ATP = O-phospho-L-threonyl-[protein] + ADP + H(+). Activated by the MAPK kinase wisl, and negatively regulated by pypl and pyp2 tyrosine phosphatases. Functionally, proline-directed serine/threonine-protein kinase involved in a signal transduction pathway that is activated by changes in the osmolarity of the extracellular environment. Controls osmotic regulation of transcription of target genes. Involved in osmoregulation and stress response pathways leading to an efficient start of sexual differentiation. Supports translation initiation and facilitates adaptation to environmental stress in part through reducing eIF2-alpha phosphorylation. Links the cell-cycle G2/M control with changes in the extracellular environment that affect cell physiology. Phosphorylates atf1 and mkp1. In conjunction with hal4, has a role in the cellular resistance to toxic cations such as Na(+), Li(+) and Ca(2+). Involved in resistance to arsenite, methylglyoxal and hydrogen peroxide. Involved in induction of thermotolerance in mRNA export, as well as in vacuolar fission. This chain is Mitogen-activated protein kinase sty1 (sty1), found in Schizosaccharomyces pombe (strain 972 / ATCC 24843) (Fission yeast).